Here is a 939-residue protein sequence, read N- to C-terminus: Protein translocase subunit SecA 1 (939 aa).

Residues Gln85, 103–107, and Asp504 contribute to the ATP site; that span reads GEGKT. The tract at residues 848 to 939 is disordered; that stretch reads EVPVEDEKPS…QSKGGRRRKK (92 aa). 3 stretches are compositionally biased toward basic and acidic residues: residues 852–863, 872–889, and 914–925; these read EDEKPSLEKEDA, PEIR…DRLH, and PVRSEADGLTRA. Residues 926 to 939 show a composition bias toward basic residues; that stretch reads ERRKQSKGGRRRKK.

This sequence belongs to the SecA family. In terms of assembly, monomer and homodimer. Part of the essential Sec protein translocation apparatus which comprises SecA, SecYEG and auxiliary proteins SecDF. Other proteins may also be involved.

The protein resides in the cell membrane. Its subcellular location is the cytoplasm. The catalysed reaction is ATP + H2O + cellular proteinSide 1 = ADP + phosphate + cellular proteinSide 2.. Its function is as follows. Part of the Sec protein translocase complex. Interacts with the SecYEG preprotein conducting channel. Has a central role in coupling the hydrolysis of ATP to the transfer of proteins into and across the cell membrane, serving as an ATP-driven molecular motor driving the stepwise translocation of polypeptide chains across the membrane. In Streptomyces avermitilis (strain ATCC 31267 / DSM 46492 / JCM 5070 / NBRC 14893 / NCIMB 12804 / NRRL 8165 / MA-4680), this protein is Protein translocase subunit SecA 1.